The chain runs to 297 residues: MTRPIVSSRPLKALYDIPAPAKLNLFLHITGRRPDGYHLLQSVFMLIDWCDTLHFELRTDGQISRTDLNSPAQNNFEALPAEDLAVRAARALQAASGTPLGVHISLEKNIPSQAGMGGGSSDAASCLLALQRLWGVRLPSQDLRAIALSLGADVPFFLSGSHAWVEGIGEQITPITLPAARFVVLKPAAGVSTPDIFNAPDLKRDTKTATMLGFAAYADGPVFGFGHNDLQPVAQKLCPQISQSLDWLESQQLQGRMTGSGSAVFAQIFDDADLAAAPGNWIIRKCKNLQTHPLACW.

Residue Lys22 is part of the active site. 111–121 (PSQAGMGGGSS) contributes to the ATP binding site. The active site involves Asp153.

This sequence belongs to the GHMP kinase family. IspE subfamily.

The enzyme catalyses 4-CDP-2-C-methyl-D-erythritol + ATP = 4-CDP-2-C-methyl-D-erythritol 2-phosphate + ADP + H(+). The protein operates within isoprenoid biosynthesis; isopentenyl diphosphate biosynthesis via DXP pathway; isopentenyl diphosphate from 1-deoxy-D-xylulose 5-phosphate: step 3/6. Catalyzes the phosphorylation of the position 2 hydroxy group of 4-diphosphocytidyl-2C-methyl-D-erythritol. This Polaromonas naphthalenivorans (strain CJ2) protein is 4-diphosphocytidyl-2-C-methyl-D-erythritol kinase.